The chain runs to 221 residues: Very-long-chain (3R)-3-hydroxyacyl-CoA dehydratase PASTICCINO 2A (221 aa).

Residues 1–11 (MAGVGSAVRRL) are Cytoplasmic-facing. Residues 12 to 32 (YLSVYNWAVFFGWAQVLYYAV) form a helical membrane-spanning segment. Residues 33–51 (TTLLESGHEAVYAAVERPL) are Lumenal-facing. A helical membrane pass occupies residues 52-70 (QFAQTAAFLEILHGLVGLV). At 71 to 76 (RSPVSA) the chain is on the cytoplasmic side. Residues 77-95 (TLPQIGSRLFLTWGILWSF) traverse the membrane as a helical segment. Over 96–100 (PETHS) the chain is Lumenal. The helical transmembrane segment at 101-121 (HILVTSLVISWSITEIIRYSF) threads the bilayer. Topologically, residues 122–141 (FGMKEAFGFAPSWLLWLRYS) are cytoplasmic. A helical transmembrane segment spans residues 142-165 (TFMVLYPTGISSEVGLIYIALPYM). Residues Y147 and E154 contribute to the active site. Residues 166-184 (KASEKYCLRMPNKWNFSFD) lie on the Lumenal side of the membrane. A helical membrane pass occupies residues 185-209 (FFYASILSLAIYVPGSPHMFTYMLA). Topologically, residues 210 to 221 (QRKKALAKAKAA) are cytoplasmic.

This sequence belongs to the very long-chain fatty acids dehydratase HACD family.

It localises to the endoplasmic reticulum membrane. It carries out the reaction a very-long-chain (3R)-3-hydroxyacyl-CoA = a very-long-chain (2E)-enoyl-CoA + H2O. Its pathway is lipid metabolism; fatty acid biosynthesis. Functionally, catalyzes the third of the four reactions of the long-chain fatty acids elongation cycle. This endoplasmic reticulum-bound enzymatic process, allows the addition of two carbons to the chain of long- and very long-chain fatty acids/VLCFAs per cycle. This enzyme catalyzes the dehydration of the 3-hydroxyacyl-CoA intermediate into trans-2,3-enoyl-CoA, within each cycle of fatty acid elongation. Thereby, it participates in the production of VLCFAs of different chain lengths that are involved in multiple biological processes as precursors of membrane lipids and lipid mediators. May be an anti-phosphatase that prevents CDKA-1 dephosphorylation and activation. Involved in the hormonal control of cell division and differentiation. Required for proliferation control of meristematic and non-meristematic cells. Negative regulator of the cell cycle. In Oryza sativa subsp. japonica (Rice), this protein is Very-long-chain (3R)-3-hydroxyacyl-CoA dehydratase PASTICCINO 2A (PAS2A).